The following is a 72-amino-acid chain: Translation initiation factor IF-1 (72 aa).

Positions 1-72 constitute an S1-like domain; sequence MSKQTAIEQD…TKGRISFRYK (72 aa).

This sequence belongs to the IF-1 family. In terms of assembly, component of the 30S ribosomal translation pre-initiation complex which assembles on the 30S ribosome in the order IF-2 and IF-3, IF-1 and N-formylmethionyl-tRNA(fMet); mRNA recruitment can occur at any time during PIC assembly.

Its subcellular location is the cytoplasm. Functionally, one of the essential components for the initiation of protein synthesis. Stabilizes the binding of IF-2 and IF-3 on the 30S subunit to which N-formylmethionyl-tRNA(fMet) subsequently binds. Helps modulate mRNA selection, yielding the 30S pre-initiation complex (PIC). Upon addition of the 50S ribosomal subunit IF-1, IF-2 and IF-3 are released leaving the mature 70S translation initiation complex. The polypeptide is Translation initiation factor IF-1 (Porphyromonas gingivalis (strain ATCC BAA-308 / W83)).